A 628-amino-acid chain; its full sequence is Biosynthetic arginine decarboxylase (628 aa).

An N6-(pyridoxal phosphate)lysine modification is found at lysine 99. Position 279–289 (279–289 (VDVGGGLGIDY)) interacts with substrate.

Belongs to the Orn/Lys/Arg decarboxylase class-II family. SpeA subfamily. Mg(2+) serves as cofactor. The cofactor is pyridoxal 5'-phosphate.

It catalyses the reaction L-arginine + H(+) = agmatine + CO2. It functions in the pathway amine and polyamine biosynthesis; agmatine biosynthesis; agmatine from L-arginine: step 1/1. Functionally, catalyzes the biosynthesis of agmatine from arginine. This is Biosynthetic arginine decarboxylase from Xylella fastidiosa (strain M23).